Here is an 875-residue protein sequence, read N- to C-terminus: Kelch-like protein 29 (875 aa).

Residues 113 to 126 are compositionally biased toward polar residues; sequence IRWGQTPVNQSTPW. Disordered regions lie at residues 113 to 145 and 240 to 291; these read IRWG…PGTG and GVGQ…DSAH. The segment covering 131–140 has biased composition (basic and acidic residues); sequence PPSKQMRESD. Residues 270–280 show a composition bias toward low complexity; that stretch reads PSAALPSSVPA. Residues 329-401 enclose the BTB domain; sequence TDLKIVVEGR…VYTGSLVIDS (73 aa). Kelch repeat units follow at residues 585-635, 637-683, 684-730, 732-778, 779-821, and 822-870; these read VIVL…VSAG, NIYL…VYDG, KIYT…VCGG, IYVF…TLNG, FVFI…VLDG, and KIYA…VIKK.

This is Kelch-like protein 29 (Klhl29) from Mus musculus (Mouse).